Reading from the N-terminus, the 877-residue chain is Leucine--tRNA ligase (877 aa).

The short motif at 48–58 (PYPSGKLHMGH) is the 'HIGH' region element. The short motif at 636–640 (KMSKS) is the 'KMSKS' region element. K639 lines the ATP pocket.

Belongs to the class-I aminoacyl-tRNA synthetase family.

The protein resides in the cytoplasm. It catalyses the reaction tRNA(Leu) + L-leucine + ATP = L-leucyl-tRNA(Leu) + AMP + diphosphate. This Ralstonia pickettii (strain 12J) protein is Leucine--tRNA ligase.